We begin with the raw amino-acid sequence, 100 residues long: Small ribosomal subunit protein uS14c (100 aa).

This sequence belongs to the universal ribosomal protein uS14 family. As to quaternary structure, part of the 30S ribosomal subunit.

It is found in the plastid. It localises to the chloroplast. Binds 16S rRNA, required for the assembly of 30S particles. This Pyropia yezoensis (Susabi-nori) protein is Small ribosomal subunit protein uS14c.